The following is a 160-amino-acid chain: Phosphopantetheine adenylyltransferase (160 aa).

T10 serves as a coordination point for substrate. Residues 10–11 (TF) and H18 contribute to the ATP site. Residues K42, M74, and R88 each contribute to the substrate site. ATP is bound by residues 89 to 91 (GVR), E99, and 124 to 130 (WSYISST).

It belongs to the bacterial CoaD family. Homohexamer. Mg(2+) is required as a cofactor.

The protein resides in the cytoplasm. The catalysed reaction is (R)-4'-phosphopantetheine + ATP + H(+) = 3'-dephospho-CoA + diphosphate. Its pathway is cofactor biosynthesis; coenzyme A biosynthesis; CoA from (R)-pantothenate: step 4/5. In terms of biological role, reversibly transfers an adenylyl group from ATP to 4'-phosphopantetheine, yielding dephospho-CoA (dPCoA) and pyrophosphate. The sequence is that of Phosphopantetheine adenylyltransferase from Sodalis glossinidius (strain morsitans).